Reading from the N-terminus, the 524-residue chain is 2-isopropylmalate synthase (524 aa).

Residues 5–267 form the Pyruvate carboxyltransferase domain; that stretch reads VIIFDTTLRD…HTNINHQEIF (263 aa). Mn(2+)-binding residues include D14, H202, H204, and N238. The segment at 392 to 524 is regulatory domain; the sequence is SLDYFSVQSG…SKHQNNQETV (133 aa).

This sequence belongs to the alpha-IPM synthase/homocitrate synthase family. LeuA type 1 subfamily. As to quaternary structure, homodimer. Mn(2+) serves as cofactor.

It is found in the cytoplasm. It catalyses the reaction 3-methyl-2-oxobutanoate + acetyl-CoA + H2O = (2S)-2-isopropylmalate + CoA + H(+). The protein operates within amino-acid biosynthesis; L-leucine biosynthesis; L-leucine from 3-methyl-2-oxobutanoate: step 1/4. Catalyzes the condensation of the acetyl group of acetyl-CoA with 3-methyl-2-oxobutanoate (2-ketoisovalerate) to form 3-carboxy-3-hydroxy-4-methylpentanoate (2-isopropylmalate). This Serratia proteamaculans (strain 568) protein is 2-isopropylmalate synthase.